The following is a 95-amino-acid chain: Aspartyl/glutamyl-tRNA(Asn/Gln) amidotransferase subunit C (95 aa).

It belongs to the GatC family. As to quaternary structure, heterotrimer of A, B and C subunits.

It catalyses the reaction L-glutamyl-tRNA(Gln) + L-glutamine + ATP + H2O = L-glutaminyl-tRNA(Gln) + L-glutamate + ADP + phosphate + H(+). The catalysed reaction is L-aspartyl-tRNA(Asn) + L-glutamine + ATP + H2O = L-asparaginyl-tRNA(Asn) + L-glutamate + ADP + phosphate + 2 H(+). Its function is as follows. Allows the formation of correctly charged Asn-tRNA(Asn) or Gln-tRNA(Gln) through the transamidation of misacylated Asp-tRNA(Asn) or Glu-tRNA(Gln) in organisms which lack either or both of asparaginyl-tRNA or glutaminyl-tRNA synthetases. The reaction takes place in the presence of glutamine and ATP through an activated phospho-Asp-tRNA(Asn) or phospho-Glu-tRNA(Gln). This is Aspartyl/glutamyl-tRNA(Asn/Gln) amidotransferase subunit C from Lysinibacillus sphaericus (strain C3-41).